We begin with the raw amino-acid sequence, 248 residues long: Probable transcriptional regulatory protein RPD_4171 (248 aa).

Positions 1–22 are disordered; sequence MAGHSQFKNIMHRKGKQDAQRS.

It belongs to the TACO1 family.

The protein resides in the cytoplasm. The sequence is that of Probable transcriptional regulatory protein RPD_4171 from Rhodopseudomonas palustris (strain BisB5).